A 126-amino-acid chain; its full sequence is Histone H2B type 1-C/E/G (126 aa).

The segment covering 1–12 has biased composition (low complexity); the sequence is MPEPAKSAPAPK. The tract at residues 1 to 36 is disordered; that stretch reads MPEPAKSAPAPKKGSKKAVTKAQKKDGKKRKRSRKE. Pro-2 is modified (N-acetylproline). Position 3 is an ADP-ribosyl glutamic acid (Glu-3). Residue Lys-6 is modified to N6-(2-hydroxyisobutyryl)lysine; alternate. At Lys-6 the chain carries N6-(beta-hydroxybutyryl)lysine; alternate. N6-acetyllysine; alternate is present on Lys-6. Lys-6 carries the post-translational modification N6-butyryllysine; alternate. Lys-6 carries the N6-crotonyllysine; alternate modification. Lys-6 carries the N6-lactoyllysine; alternate modification. A Glycyl lysine isopeptide (Lys-Gly) (interchain with G-Cter in SUMO2); alternate cross-link involves residue Lys-6. Ser-7 bears the ADP-ribosylserine mark. N6-(beta-hydroxybutyryl)lysine; alternate is present on Lys-12. An N6-acetyllysine; alternate mark is found at Lys-12 and Lys-13. Residues Lys-12 and Lys-13 each carry the N6-crotonyllysine; alternate modification. N6-lactoyllysine; alternate is present on Lys-12. Lys-13 is modified (N6-(2-hydroxyisobutyryl)lysine; alternate). Phosphoserine; by STK4/MST1 is present on Ser-15. An N6-acetyllysine; alternate mark is found at Lys-16, Lys-17, Lys-21, and Lys-24. 4 positions are modified to N6-crotonyllysine; alternate: Lys-16, Lys-17, Lys-21, and Lys-24. Lys-16, Lys-17, Lys-21, and Lys-24 each carry N6-lactoyllysine; alternate. Lys-17 is modified (N6-glutaryllysine; alternate). N6-(2-hydroxyisobutyryl)lysine; alternate is present on residues Lys-21 and Lys-24. Lys-21 is subject to N6-(beta-hydroxybutyryl)lysine; alternate. Position 21 is an N6-butyryllysine; alternate (Lys-21). Residue Lys-21 forms a Glycyl lysine isopeptide (Lys-Gly) (interchain with G-Cter in SUMO2); alternate linkage. An N6-(2-hydroxyisobutyryl)lysine modification is found at Lys-25. Lys-35 carries the post-translational modification N6-(2-hydroxyisobutyryl)lysine; alternate. Lys-35 is modified (N6-(beta-hydroxybutyryl)lysine; alternate). Lys-35 is modified (N6-crotonyllysine; alternate). Lys-35 is subject to N6-glutaryllysine; alternate. The residue at position 35 (Lys-35) is an N6-succinyllysine; alternate. Lys-35 participates in a covalent cross-link: Glycyl lysine isopeptide (Lys-Gly) (interchain with G-Cter in ubiquitin); alternate. Glu-36 carries the post-translational modification PolyADP-ribosyl glutamic acid. Position 37 is a phosphoserine; by AMPK (Ser-37). N6-(2-hydroxyisobutyryl)lysine; alternate is present on residues Lys-44, Lys-47, and Lys-58. The residue at position 44 (Lys-44) is an N6-lactoyllysine; alternate. 2 positions are modified to N6-glutaryllysine; alternate: Lys-44 and Lys-47. An N6-methyllysine; alternate modification is found at Lys-47. Lys-58 carries the N6,N6-dimethyllysine; alternate modification. Arg-80 is subject to Dimethylated arginine. An N6-(2-hydroxyisobutyryl)lysine; alternate modification is found at Lys-86. Residue Lys-86 is modified to N6-acetyllysine; alternate. Lys-86 is modified (N6-lactoyllysine; alternate). The residue at position 86 (Lys-86) is an N6,N6,N6-trimethyllysine; alternate. 2 positions are modified to omega-N-methylarginine: Arg-87 and Arg-93. Lys-109 is modified (N6-(2-hydroxyisobutyryl)lysine; alternate). N6-(beta-hydroxybutyryl)lysine; alternate is present on Lys-109. At Lys-109 the chain carries N6-lactoyllysine; alternate. Lys-109 is subject to N6-glutaryllysine; alternate. Residue Lys-109 is modified to N6-methyllysine; alternate. Ser-113 carries an O-linked (GlcNAc) serine glycan. Thr-116 carries the phosphothreonine modification. 2 positions are modified to N6-(2-hydroxyisobutyryl)lysine; alternate: Lys-117 and Lys-121. Lys-117 bears the N6-(beta-hydroxybutyryl)lysine; alternate mark. Residues Lys-117 and Lys-121 each carry the N6-lactoyllysine; alternate modification. N6-glutaryllysine; alternate is present on residues Lys-117 and Lys-121. 2 positions are modified to N6-succinyllysine; alternate: Lys-117 and Lys-121. Position 117 is an N6-methylated lysine; alternate (Lys-117). A Glycyl lysine isopeptide (Lys-Gly) (interchain with G-Cter in ubiquitin); alternate cross-link involves residue Lys-121.

This sequence belongs to the histone H2B family. As to quaternary structure, the nucleosome is a histone octamer containing two molecules each of H2A, H2B, H3 and H4 assembled in one H3-H4 heterotetramer and two H2A-H2B heterodimers. The octamer wraps approximately 147 bp of DNA. Interacts with VRK1; the interaction is mediated by the nucleosome acidic patch, a cluster of negatively charged residues of H2A and H2B forming a cleft within the nucleosome core. In terms of processing, monoubiquitination at Lys-35 (H2BK34Ub) by the MSL1/MSL2 dimer is required for histone H3 'Lys-4' (H3K4me) and 'Lys-79' (H3K79me) methylation and transcription activation at specific gene loci, such as HOXA9 and MEIS1 loci. Similarly, monoubiquitination at Lys-121 (H2BK120Ub) by the RNF20/40 complex gives a specific tag for epigenetic transcriptional activation and is also prerequisite for histone H3 'Lys-4' and 'Lys-79' methylation. It also functions cooperatively with the FACT dimer to stimulate elongation by RNA polymerase II. H2BK120Ub also acts as a regulator of mRNA splicing: deubiquitination by USP49 is required for efficient cotranscriptional splicing of a large set of exons. Phosphorylated on Ser-15 (H2BS14ph) by STK4/MST1 during apoptosis; which facilitates apoptotic chromatin condensation. Also phosphorylated on Ser-15 in response to DNA double strand breaks (DSBs), and in correlation with somatic hypermutation and immunoglobulin class-switch recombination. Phosphorylation at Ser-37 (H2BS36ph) by AMPK in response to stress promotes transcription. Post-translationally, glcNAcylation at Ser-113 promotes monoubiquitination of Lys-121. It fluctuates in response to extracellular glucose, and associates with transcribed genes. In terms of processing, ADP-ribosylated by PARP1 or PARP2 on Ser-7 (H2BS6ADPr) in response to DNA damage. H2BS6ADPr promotes recruitment of CHD1L. Mono-ADP-ribosylated on Glu-3 (H2BE2ADPr) by PARP3 in response to single-strand breaks. Poly ADP-ribosylation on Glu-36 (H2BE35ADPr) by PARP1 regulates adipogenesis: it inhibits phosphorylation at Ser-37 (H2BS36ph), thereby blocking expression of pro-adipogenetic genes. Crotonylation (Kcr) is specifically present in male germ cells and marks testis-specific genes in post-meiotic cells, including X-linked genes that escape sex chromosome inactivation in haploid cells. Crotonylation marks active promoters and enhancers and confers resistance to transcriptional repressors. It is also associated with post-meiotically activated genes on autosomes. Post-translationally, hydroxybutyrylation of histones is induced by starvation. In terms of processing, lactylated in macrophages by EP300/P300 by using lactoyl-CoA directly derived from endogenous or exogenous lactate, leading to stimulates gene transcription.

It is found in the nucleus. The protein localises to the chromosome. Core component of nucleosome. Nucleosomes wrap and compact DNA into chromatin, limiting DNA accessibility to the cellular machineries which require DNA as a template. Histones thereby play a central role in transcription regulation, DNA repair, DNA replication and chromosomal stability. DNA accessibility is regulated via a complex set of post-translational modifications of histones, also called histone code, and nucleosome remodeling. The sequence is that of Histone H2B type 1-C/E/G from Mus musculus (Mouse).